The sequence spans 330 residues: Aspartate--ammonia ligase (330 aa).

It belongs to the class-II aminoacyl-tRNA synthetase family. AsnA subfamily.

It is found in the cytoplasm. It catalyses the reaction L-aspartate + NH4(+) + ATP = L-asparagine + AMP + diphosphate + H(+). The protein operates within amino-acid biosynthesis; L-asparagine biosynthesis; L-asparagine from L-aspartate (ammonia route): step 1/1. This Streptococcus agalactiae serotype Ia (strain ATCC 27591 / A909 / CDC SS700) protein is Aspartate--ammonia ligase.